Here is a 275-residue protein sequence, read N- to C-terminus: tRNA uridine(34) hydroxylase (275 aa).

The Rhodanese domain occupies 122-218 (SRSDVYTIDT…YFKSTQNKNS (97 aa)). Cys178 serves as the catalytic Cysteine persulfide intermediate.

Belongs to the TrhO family.

The catalysed reaction is uridine(34) in tRNA + AH2 + O2 = 5-hydroxyuridine(34) in tRNA + A + H2O. Functionally, catalyzes oxygen-dependent 5-hydroxyuridine (ho5U) modification at position 34 in tRNAs. The chain is tRNA uridine(34) hydroxylase from Ehrlichia chaffeensis (strain ATCC CRL-10679 / Arkansas).